A 258-amino-acid chain; its full sequence is Chemokine-binding protein (258 aa).

The N-terminal stretch at 1-17 (MKQYIVLACMCLAAAAM) is a signal peptide. Residues 65–93 (TEITESESDPDPEVESEDDSTSVEDVDPP) form a disordered region. The span at 68–91 (TESESDPDPEVESEDDSTSVEDVD) shows a compositional bias: acidic residues.

It belongs to the orthopoxvirus OPG001 family. In terms of assembly, binds to host CC chemokines, such as RANTES/CCL5, MIP-1alpha/CCL3, MCP-1/CCL2 and eotaxin.

It is found in the secreted. Functionally, inhibits host immune defense by binding to host chemokines. Binds host CC chemokines (beta chemokines) such as RANTES with high affinity, but not CXC or C chemokines (alpha and gamma chemokines). The protein is Chemokine-binding protein (OPG001) of Homo sapiens (Human).